The primary structure comprises 274 residues: Exosome complex component Rrp42 (274 aa).

Belongs to the RNase PH family. Rrp42 subfamily. Component of the archaeal exosome complex. Forms a hexameric ring-like arrangement composed of 3 Rrp41-Rrp42 heterodimers. The hexameric ring associates with a trimer of Rrp4 and/or Csl4 subunits.

Its subcellular location is the cytoplasm. Functionally, non-catalytic component of the exosome, which is a complex involved in RNA degradation. Contributes to the structuring of the Rrp41 active site. This is Exosome complex component Rrp42 from Pyrococcus abyssi (strain GE5 / Orsay).